The sequence spans 363 residues: Dual-specificity RNA methyltransferase RlmN (363 aa).

Catalysis depends on Glu-102, which acts as the Proton acceptor. In terms of domain architecture, Radical SAM core spans Glu-108–Glu-344. Cys-115 and Cys-350 are joined by a disulfide. Cys-122, Cys-126, and Cys-129 together coordinate [4Fe-4S] cluster. S-adenosyl-L-methionine-binding positions include Gly-174–Glu-175, Ser-206, Ser-228–His-230, and Asn-307. The S-methylcysteine intermediate role is filled by Cys-350.

The protein belongs to the radical SAM superfamily. RlmN family. [4Fe-4S] cluster is required as a cofactor.

It localises to the cytoplasm. The enzyme catalyses adenosine(2503) in 23S rRNA + 2 reduced [2Fe-2S]-[ferredoxin] + 2 S-adenosyl-L-methionine = 2-methyladenosine(2503) in 23S rRNA + 5'-deoxyadenosine + L-methionine + 2 oxidized [2Fe-2S]-[ferredoxin] + S-adenosyl-L-homocysteine. It catalyses the reaction adenosine(37) in tRNA + 2 reduced [2Fe-2S]-[ferredoxin] + 2 S-adenosyl-L-methionine = 2-methyladenosine(37) in tRNA + 5'-deoxyadenosine + L-methionine + 2 oxidized [2Fe-2S]-[ferredoxin] + S-adenosyl-L-homocysteine. In terms of biological role, specifically methylates position 2 of adenine 2503 in 23S rRNA and position 2 of adenine 37 in tRNAs. m2A2503 modification seems to play a crucial role in the proofreading step occurring at the peptidyl transferase center and thus would serve to optimize ribosomal fidelity. The sequence is that of Dual-specificity RNA methyltransferase RlmN from Buchnera aphidicola subsp. Acyrthosiphon pisum (strain APS) (Acyrthosiphon pisum symbiotic bacterium).